Here is a 101-residue protein sequence, read N- to C-terminus: Putative regulatory protein Csac_2087 (101 aa).

This sequence belongs to the RemA family.

The sequence is that of Putative regulatory protein Csac_2087 from Caldicellulosiruptor saccharolyticus (strain ATCC 43494 / DSM 8903 / Tp8T 6331).